We begin with the raw amino-acid sequence, 417 residues long: Serine hydroxymethyltransferase 1 (417 aa).

Residues Leu121 and 125–127 (GHL) contribute to the (6S)-5,6,7,8-tetrahydrofolate site. An N6-(pyridoxal phosphate)lysine modification is found at Lys229. 354–356 (SPF) provides a ligand contact to (6S)-5,6,7,8-tetrahydrofolate.

This sequence belongs to the SHMT family. As to quaternary structure, homodimer. Pyridoxal 5'-phosphate is required as a cofactor.

The protein localises to the cytoplasm. The enzyme catalyses (6R)-5,10-methylene-5,6,7,8-tetrahydrofolate + glycine + H2O = (6S)-5,6,7,8-tetrahydrofolate + L-serine. It functions in the pathway one-carbon metabolism; tetrahydrofolate interconversion. It participates in amino-acid biosynthesis; glycine biosynthesis; glycine from L-serine: step 1/1. In terms of biological role, catalyzes the reversible interconversion of serine and glycine with tetrahydrofolate (THF) serving as the one-carbon carrier. This reaction serves as the major source of one-carbon groups required for the biosynthesis of purines, thymidylate, methionine, and other important biomolecules. Also exhibits THF-independent aldolase activity toward beta-hydroxyamino acids, producing glycine and aldehydes, via a retro-aldol mechanism. This chain is Serine hydroxymethyltransferase 1, found in Pseudomonas fluorescens (strain ATCC BAA-477 / NRRL B-23932 / Pf-5).